A 98-amino-acid chain; its full sequence is Protein Frey 1 (98 aa).

Residues 13 to 29 form a helical membrane-spanning segment; sequence AGLSLFLHLILAVALLR. Residues 60–87 are disordered; sequence YGILPKHPRPRGPRPLLSRAQQRKRDGP.

Interacts with SPPL2C (via active sites); the interaction stabilizes FREY1 protein and inhibits SPPL2C proteolytic activity. Interacts with IZUMO1; the interaction retains IZUMO1 at the endoplasmic reticulum membrane and coordinates IZUMO1 complex assembly.

It localises to the endoplasmic reticulum membrane. Its function is as follows. Key regulator for male fertility expressed transiently in round spermatids where it recruits IZUMO1 at the endoplasmic reticulum (ER) membrane and coordinates the oolemmal binding multimeric complex (IZUMO1 complex) assembly. Upon complete assembly of the IZUMO1 complex, its ER retention is released, facilitating IZUMO1 complex export to the acrosome. Through the interaction with SPPL2C, inhibits its intramembrane protease activity directly accessing the catalytic center of an I-CLiP. This chain is Protein Frey 1, found in Homo sapiens (Human).